The chain runs to 435 residues: Probable protein arginine N-methyltransferase 6 (435 aa).

A disordered region spans residues M1–G48. The span at H12–Q25 shows a compositional bias: basic and acidic residues. The SAM-dependent MTase PRMT-type domain occupies D80–H418. S-adenosyl-L-methionine-binding residues include H93, R102, G126, D148, and E177. Catalysis depends on residues E191 and E200. The segment at P333–P377 is disordered. A compositionally biased stretch (low complexity) spans T337–E354.

The protein belongs to the class I-like SAM-binding methyltransferase superfamily. Protein arginine N-methyltransferase family. PRMT6 subfamily.

Its function is as follows. Arginine methyltransferase that can both catalyze the formation of omega-N monomethylarginine (MMA) and asymmetrical dimethylarginine (aDMA). This is Probable protein arginine N-methyltransferase 6 (PRMT6) from Arabidopsis thaliana (Mouse-ear cress).